Consider the following 418-residue polypeptide: Ras association domain-containing protein 5 (418 aa).

Positions 1–118 (MAMASPAIGQ…QPQDPRVPAE (118 aa)) are disordered. The residue at position 2 (Ala-2) is an N-acetylthreonine. Over residues 77–89 (SRPARPLRPGLQQ) the composition is skewed to low complexity. The segment at 122–170 (GHCFAELVLPGGPGWCDLCGREVLRQALRCTNCKFTCHPECRSLIQLDC) adopts a Phorbol-ester/DAG-type zinc-finger fold. A phosphoserine mark is found at Ser-182 and Ser-279. The region spanning 274–364 (TDKRTSFYLP…LSFVLKENET (91 aa)) is the Ras-associating domain. Residue Thr-352 is modified to Phosphothreonine. The region spanning 366-413 (EVEWDAFSIPELQNFLTILEKEEQDKIQQVQKKYDKFRQKLEEALRES) is the SARAH domain.

Interacts directly with activated HRAS; a RASSF5-STK4/MST1 complex probably associates with activated HRAS. Interacts with KRAS. Probably interacts with Ras-like GTPases RRAS, MRAS, RAP1B, RAP2A and RALA. Interacts with RRAS2. Can self-associate. Interacts with RSSF1 isoform A. The RSSF1 isoform A-RSSF5 heterodimer probably mediates the association of RSSF1 with HRAS. Isoform 2 interacts with activated RAP1A and ITGAL/LFA-1. Binds STK4/MST1, inhibiting STK4/MST1 autoactivation. As to expression, widely expressed. Frequently down-regulated in lung tumor cell lines and primary lung tumors.

The protein localises to the cytoplasm. It is found in the cytoskeleton. Potential tumor suppressor. Seems to be involved in lymphocyte adhesion by linking RAP1A activation upon T-cell receptor or chemokine stimulation to integrin activation. Isoform 2 stimulates lymphocyte polarization and the patch-like distribution of ITGAL/LFA-1, resulting in an enhanced adhesion to ICAM1. Together with RAP1A may participate in regulation of microtubule growth. The association of isoform 2 with activated RAP1A is required for directional movement of endothelial cells during wound healing. May be involved in regulation of Ras apoptotic function. The RASSF5-STK4/MST1 complex may mediate HRAS and KRAS induced apoptosis. The polypeptide is Ras association domain-containing protein 5 (RASSF5) (Homo sapiens (Human)).